The sequence spans 190 residues: Shikimate kinase (190 aa).

13-18 (GSGKTT) provides a ligand contact to ATP. Thr-17 is a Mg(2+) binding site. Substrate contacts are provided by Asp-35, Arg-59, and Gly-81. Residue Arg-119 coordinates ATP. Arg-138 lines the substrate pocket. Gln-155 lines the ATP pocket.

The protein belongs to the shikimate kinase family. As to quaternary structure, monomer. Mg(2+) serves as cofactor.

It localises to the cytoplasm. It carries out the reaction shikimate + ATP = 3-phosphoshikimate + ADP + H(+). Its pathway is metabolic intermediate biosynthesis; chorismate biosynthesis; chorismate from D-erythrose 4-phosphate and phosphoenolpyruvate: step 5/7. Catalyzes the specific phosphorylation of the 3-hydroxyl group of shikimic acid using ATP as a cosubstrate. In Nitrosococcus oceani (strain ATCC 19707 / BCRC 17464 / JCM 30415 / NCIMB 11848 / C-107), this protein is Shikimate kinase.